The following is a 91-amino-acid chain: uncharacterized protein (91 aa).

The next 3 helical transmembrane spans lie at 9–29 (LIHAIGGIIFGYLANYVYTAG), 30–50 (LGIFSGIATLIFLFIGAVIFG), and 67–87 (WLGCGVLPFFLVAIVVWVLKF).

It is found in the cell membrane. This is an uncharacterized protein from Methanocaldococcus jannaschii (strain ATCC 43067 / DSM 2661 / JAL-1 / JCM 10045 / NBRC 100440) (Methanococcus jannaschii).